A 66-amino-acid chain; its full sequence is Alpha-like toxin BeM9 (66 aa).

In terms of domain architecture, LCN-type CS-alpha/beta spans 2-66 (RDAYIAKPHN…VPIRIPGKCH (65 aa)). Intrachain disulfides connect Cys-12/Cys-65, Cys-16/Cys-38, Cys-24/Cys-48, and Cys-28/Cys-50.

Belongs to the long (4 C-C) scorpion toxin superfamily. Sodium channel inhibitor family. Alpha subfamily. In terms of tissue distribution, expressed by the venom gland.

The protein resides in the secreted. Its function is as follows. Alpha toxins bind voltage-independently at site-3 of sodium channels (Nav) and inhibit the inactivation of the activated channels, thereby blocking neuronal transmission. This toxin is active on both mammals and insects, since it inhibits inactivation of rNav1.4/SCN4A, hNav1.5/SCN5A, mNav1.6/SCN8A and insect BgNav1 and DmNav1 channels. In vivo, it shows paralytic activity in mice. In Mesobuthus eupeus (Lesser Asian scorpion), this protein is Alpha-like toxin BeM9.